Here is a 344-residue protein sequence, read N- to C-terminus: MLQRARLWPPIFTSRCAPFPFSRSISIPYRRMAGVPSTYDAPVHIAVIGGTGISSLPGFELAATLDVDTPWGKPSSPISILQHNSPTTGKPVPVAFLSRHGLHHEHAPHEVKNQANIAALRHIGVRTIIAFSAVGSLQEEVRPRDFVVPDQIIDRTKGIRPFTFFEKGMVGHVGFGDPFDKSLAEIVRKCGHSLEGEGVRLHDKGLLICMEGPQFSTRAESNLYRTWGGSVINMSALPEAKLAREAEISYQMICMATDYDCWRGDGSEDVNVEMVMAHMKANAENARRFVGAVLNELTKEEHGELVLAKHIEGQMRFAGAMTKKEGRGQDAEKKLQWLFPGYFD.

Phosphate is bound by residues T51, 99–100 (RH), and 132–133 (SA). M234 contacts substrate. S235 contributes to the phosphate binding site. Residue 258-260 (DYD) coordinates substrate.

Belongs to the PNP/MTAP phosphorylase family. MTAP subfamily. Homotrimer.

It localises to the cytoplasm. The protein resides in the nucleus. It catalyses the reaction S-methyl-5'-thioadenosine + phosphate = 5-(methylsulfanyl)-alpha-D-ribose 1-phosphate + adenine. Its pathway is amino-acid biosynthesis; L-methionine biosynthesis via salvage pathway; S-methyl-5-thio-alpha-D-ribose 1-phosphate from S-methyl-5'-thioadenosine (phosphorylase route): step 1/1. In terms of biological role, catalyzes the reversible phosphorylation of S-methyl-5'-thioadenosine (MTA) to adenine and 5-methylthioribose-1-phosphate. Involved in the breakdown of MTA, a major by-product of polyamine biosynthesis. Responsible for the first step in the methionine salvage pathway after MTA has been generated from S-adenosylmethionine. Has broad substrate specificity with 6-aminopurine nucleosides as preferred substrates. The sequence is that of S-methyl-5'-thioadenosine phosphorylase from Phaeosphaeria nodorum (strain SN15 / ATCC MYA-4574 / FGSC 10173) (Glume blotch fungus).